Here is a 215-residue protein sequence, read N- to C-terminus: Octanoyltransferase (215 aa).

The region spanning 33 to 209 (PDTPDQLWLV…QFARKLGYET (177 aa)) is the BPL/LPL catalytic domain. Substrate-binding positions include 72 to 79 (RGGQVTYH), 139 to 141 (SLG), and 152 to 154 (GLA). Catalysis depends on cysteine 170, which acts as the Acyl-thioester intermediate.

It belongs to the LipB family.

It localises to the cytoplasm. It carries out the reaction octanoyl-[ACP] + L-lysyl-[protein] = N(6)-octanoyl-L-lysyl-[protein] + holo-[ACP] + H(+). It functions in the pathway protein modification; protein lipoylation via endogenous pathway; protein N(6)-(lipoyl)lysine from octanoyl-[acyl-carrier-protein]: step 1/2. Its function is as follows. Catalyzes the transfer of endogenously produced octanoic acid from octanoyl-acyl-carrier-protein onto the lipoyl domains of lipoate-dependent enzymes. Lipoyl-ACP can also act as a substrate although octanoyl-ACP is likely to be the physiological substrate. The sequence is that of Octanoyltransferase from Cellvibrio japonicus (strain Ueda107) (Pseudomonas fluorescens subsp. cellulosa).